The chain runs to 272 residues: Probable glutathione S-transferase DHAR2, chloroplastic (272 aa).

The N-terminal 57 residues, Met1–Arg57, are a transit peptide targeting the chloroplast. The glutathione site is built by Lys68 and Asp79. Residues Lys68 and Asp79 each contribute to the L-ascorbate site. One can recognise a GST N-terminal domain in the interval Ser70–Ser148. Cys80 functions as the Nucleophile in the catalytic mechanism. 5 residues coordinate glutathione: Lys107, Val120, Ser133, His219, and Trp266. Residues Glu126 to Gly272 enclose the GST C-terminal domain. Lys269 is a binding site for L-ascorbate.

The protein belongs to the GST superfamily. DHAR family. As to quaternary structure, monomer.

It localises to the plastid. The protein localises to the chloroplast. The enzyme catalyses RX + glutathione = an S-substituted glutathione + a halide anion + H(+). The catalysed reaction is L-dehydroascorbate + 2 glutathione = glutathione disulfide + L-ascorbate. Involved in ascorbate homeostasis. Maintains redox pools of ascorbate by recycling dihydroascorbate (DHA) to ascorbate. Involved in scavenging reactive oxygen species (ROS) under oxidative stresses. The sequence is that of Probable glutathione S-transferase DHAR2, chloroplastic from Oryza sativa subsp. japonica (Rice).